Consider the following 1158-residue polypeptide: ATP-dependent helicase/deoxyribonuclease subunit B (1158 aa).

The 275-residue stretch at 1–275 folds into the UvrD-like helicase ATP-binding domain; the sequence is MTLHAYLGRA…QYFNQLYRFN (275 aa). Position 8 to 15 (8 to 15) interacts with ATP; sequence GRAGTGKS. A UvrD-like helicase C-terminal domain is found at 269 to 583; sequence NQLYRFNNQD…SIGTMDLAKV (315 aa). [4Fe-4S] cluster is bound by residues Cys-784, Cys-1112, Cys-1115, and Cys-1121.

The protein belongs to the helicase family. AddB/RexB type 1 subfamily. In terms of assembly, heterodimer of AddA and AddB. Mg(2+) is required as a cofactor. It depends on [4Fe-4S] cluster as a cofactor.

The heterodimer acts as both an ATP-dependent DNA helicase and an ATP-dependent, dual-direction single-stranded exonuclease. Recognizes the chi site generating a DNA molecule suitable for the initiation of homologous recombination. The AddB subunit has 5' -&gt; 3' nuclease activity but not helicase activity. This Staphylococcus aureus (strain MW2) protein is ATP-dependent helicase/deoxyribonuclease subunit B.